We begin with the raw amino-acid sequence, 200 residues long: NAD(P)H dehydrogenase (quinone) (200 aa).

Residues 4 to 191 (VLVLYYSSYG…DIARYQGKHV (188 aa)) form the Flavodoxin-like domain. Residues 10-15 (SSYGHV) and 79-81 (TRF) each bind FMN. Residue Tyr-12 coordinates NAD(+). A substrate-binding site is contributed by Trp-99. Residues 114–120 (STGTQHG) and His-135 each bind FMN.

This sequence belongs to the WrbA family. It depends on FMN as a cofactor.

It carries out the reaction a quinone + NADH + H(+) = a quinol + NAD(+). The enzyme catalyses a quinone + NADPH + H(+) = a quinol + NADP(+). The sequence is that of NAD(P)H dehydrogenase (quinone) from Burkholderia ambifaria (strain MC40-6).